A 211-amino-acid chain; its full sequence is Thiamine-phosphate synthase (211 aa).

4-amino-2-methyl-5-(diphosphooxymethyl)pyrimidine contacts are provided by residues glutamine 41 to lysine 45 and asparagine 73. 2 residues coordinate Mg(2+): aspartate 74 and aspartate 93. A 4-amino-2-methyl-5-(diphosphooxymethyl)pyrimidine-binding site is contributed by threonine 112. Serine 139 to threonine 141 serves as a coordination point for 2-[(2R,5Z)-2-carboxy-4-methylthiazol-5(2H)-ylidene]ethyl phosphate. Lysine 142 serves as a coordination point for 4-amino-2-methyl-5-(diphosphooxymethyl)pyrimidine. 2-[(2R,5Z)-2-carboxy-4-methylthiazol-5(2H)-ylidene]ethyl phosphate-binding positions include glycine 169 and valine 189–serine 190.

Belongs to the thiamine-phosphate synthase family. Requires Mg(2+) as cofactor.

The catalysed reaction is 2-[(2R,5Z)-2-carboxy-4-methylthiazol-5(2H)-ylidene]ethyl phosphate + 4-amino-2-methyl-5-(diphosphooxymethyl)pyrimidine + 2 H(+) = thiamine phosphate + CO2 + diphosphate. It catalyses the reaction 2-(2-carboxy-4-methylthiazol-5-yl)ethyl phosphate + 4-amino-2-methyl-5-(diphosphooxymethyl)pyrimidine + 2 H(+) = thiamine phosphate + CO2 + diphosphate. The enzyme catalyses 4-methyl-5-(2-phosphooxyethyl)-thiazole + 4-amino-2-methyl-5-(diphosphooxymethyl)pyrimidine + H(+) = thiamine phosphate + diphosphate. Its pathway is cofactor biosynthesis; thiamine diphosphate biosynthesis; thiamine phosphate from 4-amino-2-methyl-5-diphosphomethylpyrimidine and 4-methyl-5-(2-phosphoethyl)-thiazole: step 1/1. Its function is as follows. Condenses 4-methyl-5-(beta-hydroxyethyl)thiazole monophosphate (THZ-P) and 2-methyl-4-amino-5-hydroxymethyl pyrimidine pyrophosphate (HMP-PP) to form thiamine monophosphate (TMP). The protein is Thiamine-phosphate synthase of Thioalkalivibrio sulfidiphilus (strain HL-EbGR7).